A 230-amino-acid polypeptide reads, in one-letter code: Demethylmenaquinone methyltransferase (230 aa).

Residues T62, D80, 102 to 103 (DG), and S119 contribute to the S-adenosyl-L-methionine site.

This sequence belongs to the class I-like SAM-binding methyltransferase superfamily. MenG/UbiE family.

The catalysed reaction is a 2-demethylmenaquinol + S-adenosyl-L-methionine = a menaquinol + S-adenosyl-L-homocysteine + H(+). It participates in quinol/quinone metabolism; menaquinone biosynthesis; menaquinol from 1,4-dihydroxy-2-naphthoate: step 2/2. Its function is as follows. Methyltransferase required for the conversion of demethylmenaquinol (DMKH2) to menaquinol (MKH2). The polypeptide is Demethylmenaquinone methyltransferase (Streptomyces griseus subsp. griseus (strain JCM 4626 / CBS 651.72 / NBRC 13350 / KCC S-0626 / ISP 5235)).